A 716-amino-acid chain; its full sequence is Phospholipid phosphatase-related protein type 3 (716 aa).

Helical transmembrane passes span 18-38 (LPCF…SLYF), 70-90 (LIPL…SIMV), and 131-151 (FVGV…VIQL). Residue N167 is glycosylated (N-linked (GlcNAc...) asparagine). 3 helical membrane passes run 205–225 (HATL…SVIS), 231–251 (LKPI…LTQI), and 261–281 (VYAG…HAVG). The interval 311–334 (SMYQQNKSVSTDELGPPGRLEGVP) is disordered. Polar residues predominate over residues 312–321 (MYQQNKSVST). Residue N316 is glycosylated (N-linked (GlcNAc...) asparagine). 2 positions are modified to phosphoserine: S320 and S351. Position 374 is a phosphothreonine (T374). The interval 416–488 (GRGLGLPDEA…RVILPPRPGP (73 aa)) is disordered. Residue S426 is modified to Phosphoserine. Residues 437–460 (VAEEEEEEEEEEEEEEEEEEEEEG) show a composition bias toward acidic residues. A Phosphoserine modification is found at S506. The tract at residues 548-589 (AMSKAAGGPKAETASSSSASSDSSQYRSPSDRDSASIVTIDA) is disordered. Positions 562-575 (SSSSASSDSSQYRS) are enriched in low complexity. S641 is subject to Phosphoserine. Positions 664-694 (GEGLPPPGASEGALGAGSRESTLRRQVGALG) are disordered.

The protein belongs to the PA-phosphatase related phosphoesterase family.

The protein resides in the membrane. The chain is Phospholipid phosphatase-related protein type 3 from Rattus norvegicus (Rat).